The primary structure comprises 252 residues: 5-oxoprolinase subunit A (252 aa).

It belongs to the LamB/PxpA family. As to quaternary structure, forms a complex composed of PxpA, PxpB and PxpC.

It catalyses the reaction 5-oxo-L-proline + ATP + 2 H2O = L-glutamate + ADP + phosphate + H(+). Functionally, catalyzes the cleavage of 5-oxoproline to form L-glutamate coupled to the hydrolysis of ATP to ADP and inorganic phosphate. This is 5-oxoprolinase subunit A from Mycolicibacterium gilvum (strain PYR-GCK) (Mycobacterium gilvum (strain PYR-GCK)).